We begin with the raw amino-acid sequence, 374 residues long: Methylthioribose-1-phosphate isomerase (374 aa).

An N-acetylserine modification is found at serine 2. The Proton donor role is filled by aspartate 253.

This sequence belongs to the eIF-2B alpha/beta/delta subunits family. MtnA subfamily.

It is found in the cytoplasm. It localises to the nucleus. It carries out the reaction 5-(methylsulfanyl)-alpha-D-ribose 1-phosphate = 5-(methylsulfanyl)-D-ribulose 1-phosphate. It participates in amino-acid biosynthesis; L-methionine biosynthesis via salvage pathway; L-methionine from S-methyl-5-thio-alpha-D-ribose 1-phosphate: step 1/6. Its function is as follows. Catalyzes the interconversion of methylthioribose-1-phosphate (MTR-1-P) into methylthioribulose-1-phosphate (MTRu-1-P). The chain is Methylthioribose-1-phosphate isomerase from Arabidopsis thaliana (Mouse-ear cress).